The sequence spans 444 residues: Acyl-CoA (8-3)-desaturase (444 aa).

Residue methionine 1 is modified to N-acetylmethionine. Over 1 to 121 the chain is Cytoplasmic; sequence MAPDPVAAET…FRELRATVER (121 aa). Positions 17 to 94 constitute a Cytochrome b5 heme-binding domain; sequence PRYFTWDEVA…MNSLLIGELS (78 aa). The chain crosses the membrane as a helical span at residues 122–142; that stretch reads MGLMKANHVFFLLYLLHILLL. At 143 to 145 the chain is on the lumenal side; the sequence is DGA. The chain crosses the membrane as a helical span at residues 146–170; that stretch reads AWLTLWVFGTSFLPFLLCAVLLSAV. Residues 171-267 lie on the Cytoplasmic side of the membrane; it reads QAQAGWLQHD…PYNHQHKYFF (97 aa). Residues 179–183 carry the Histidine box-1 motif; sequence HDFGH. The Histidine box-2 signature appears at 216–220; sequence HFQHH. A helical transmembrane segment spans residues 268 to 288; that stretch reads LIGPPALLPLYFQWYIFYFVI. The Lumenal segment spans residues 289-305; it reads QRKKWVDLAWMITFYVR. A helical membrane pass occupies residues 306–326; the sequence is FFLTYVPLLGLKAFLGLFFIV. The Cytoplasmic portion of the chain corresponds to 327–444; sequence RFLESNWFVW…QLWLDAYLHQ (118 aa). Positions 382–386 match the Histidine box-3 motif; it reads QIEHH.

This sequence belongs to the fatty acid desaturase type 1 family. As to expression, widely expressed, with highest levels in liver, brain, adrenal gland and heart. Highly expressed in fetal liver and brain.

Its subcellular location is the endoplasmic reticulum membrane. It localises to the mitochondrion. It carries out the reaction (8Z,11Z,14Z)-eicosatrienoyl-CoA + 2 Fe(II)-[cytochrome b5] + O2 + 2 H(+) = (5Z,8Z,11Z,14Z)-eicosatetraenoyl-CoA + 2 Fe(III)-[cytochrome b5] + 2 H2O. It catalyses the reaction (8Z,11Z,14Z,17Z)-eicosatetraenoyl-CoA + 2 Fe(II)-[cytochrome b5] + O2 + 2 H(+) = (5Z,8Z,11Z,14Z,17Z)-eicosapentaenoyl-CoA + 2 Fe(III)-[cytochrome b5] + 2 H2O. The catalysed reaction is (11E)-octadecenoyl-CoA + 2 Fe(II)-[cytochrome b5] + O2 + 2 H(+) = (5Z,11E)-octadecadienoyl-CoA + 2 Fe(III)-[cytochrome b5] + 2 H2O. It participates in lipid metabolism; polyunsaturated fatty acid biosynthesis. In terms of biological role, acts as a front-end fatty acyl-coenzyme A (CoA) desaturase that introduces a cis double bond at carbon 5 located between a preexisting double bond and the carboxyl end of the fatty acyl chain. Involved in biosynthesis of highly unsaturated fatty acids (HUFA) from the essential polyunsaturated fatty acids (PUFA) linoleic acid (LA) (18:2n-6) and alpha-linolenic acid (ALA) (18:3n-3) precursors. Specifically, desaturates dihomo-gamma-linoleoate (DGLA) (20:3n-6) and eicosatetraenoate (ETA) (20:4n-3) to generate arachidonate (AA) (20:4n-6) and eicosapentaenoate (EPA) (20:5n-3), respectively. As a rate limiting enzyme for DGLA (20:3n-6) and AA (20:4n-6)-derived eicosanoid biosynthesis, controls the metabolism of inflammatory lipids like prostaglandin E2, critical for efficient acute inflammatory response and maintenance of epithelium homeostasis. Contributes to membrane phospholipid biosynthesis by providing AA (20:4n-6) as a major acyl chain esterified into phospholipids. In particular, regulates phosphatidylinositol-4,5-bisphosphate levels, modulating inflammatory cytokine production in T-cells. Also desaturates (11E)-octadecenoate (trans-vaccenoate)(18:1n-9), a metabolite in the biohydrogenation pathway of LA (18:2n-6). Functionally, does not exhibit any catalytic activity toward 20:3n-6, but it may enhance FADS2 activity. The protein is Acyl-CoA (8-3)-desaturase of Homo sapiens (Human).